We begin with the raw amino-acid sequence, 121 residues long: Large ribosomal subunit protein uL18 (121 aa).

It belongs to the universal ribosomal protein uL18 family. In terms of assembly, part of the 50S ribosomal subunit; part of the 5S rRNA/L5/L18/L25 subcomplex. Contacts the 5S and 23S rRNAs.

In terms of biological role, this is one of the proteins that bind and probably mediate the attachment of the 5S RNA into the large ribosomal subunit, where it forms part of the central protuberance. The sequence is that of Large ribosomal subunit protein uL18 from Streptococcus suis (strain 98HAH33).